The chain runs to 359 residues: MSGLTVSIRGRNGAFAIEAGFAAEGGVTALFGHSGAGKTTLLKMIAGTLRPENGRIAVGDFTLFDAQKGINLPPEKRCIGYVFQDARLFAYMSVKRNLTYARWAGHRQATRSFDEVVALLGIGHLLDRRPSTLSGGERQRVAIGRALLSDPALLLLDEPLSSLDHARRQEILPFIERLRDESHVPIVYVSHEIDEVARLADQIVLLSAGRVTASGAAADIFPLIDAESEGGGVLLEGIVSAYDERYKLAEIDLGGASFQLSDAGLKQTMHVRLRVRARDVSIARKIPEAISIRNLLPVTVTGIERGEGPNAHVFLDFRGRRLGARLTRRSVDDLGLSVGDQVVALVKAVSVDRAAIREK.

Residues M1–V233 form the ABC transporter domain. G32–T39 is an ATP binding site. In terms of domain architecture, Mop spans A289 to A355.

It belongs to the ABC transporter superfamily. Molybdate importer (TC 3.A.1.8) family. The complex is composed of two ATP-binding proteins (ModC), two transmembrane proteins (ModB) and a solute-binding protein (ModA).

It localises to the cell inner membrane. The catalysed reaction is molybdate(out) + ATP + H2O = molybdate(in) + ADP + phosphate + H(+). In terms of biological role, part of the ABC transporter complex ModABC involved in molybdenum import. Responsible for energy coupling to the transport system. In Brucella suis biovar 1 (strain 1330), this protein is Molybdenum import ATP-binding protein ModC.